The primary structure comprises 91 residues: B3 domain-containing protein Os03g0164300 (91 aa).

Residues 1-91 (MTNAKMTFAV…VLVLKVHVLK (91 aa)) constitute a DNA-binding region (TF-B3).

The protein resides in the nucleus. This chain is B3 domain-containing protein Os03g0164300, found in Oryza sativa subsp. japonica (Rice).